Here is a 780-residue protein sequence, read N- to C-terminus: ATP-dependent 6-phosphofructokinase, muscle type (780 aa).

Thr-2 is modified (N-acetylthreonine). An N-terminal catalytic PFK domain 1 region spans residues 2–390 (THEEHHAAKT…NWEVYKLLAH (389 aa)). ATP is bound by residues Gly-25, 88 to 89 (RC), and 118 to 121 (GDGS). Asp-119 is a Mg(2+) binding site. Ser-133 is subject to Phosphoserine. Residues 164–166 (SID), Arg-201, 208–210 (MGR), Glu-264, Arg-292, and 298–301 (HVQR) each bind substrate. Asp-166 functions as the Proton acceptor in the catalytic mechanism. Position 377 is a phosphoserine (Ser-377). The interval 391-401 (IRPPVSKSGSH) is interdomain linker. Residues 402-780 (TVAVMNVGAP…SRKRSGEAPA (379 aa)) form a C-terminal regulatory PFK domain 2 region. Residues Arg-471 and 528–532 (TVSNN) each bind beta-D-fructose 2,6-bisphosphate. O-linked (GlcNAc) serine glycosylation is present at Ser-530. Residue Lys-557 is modified to N6-(2-hydroxyisobutyryl)lysine. Beta-D-fructose 2,6-bisphosphate-binding positions include Arg-566, 573 to 575 (MGG), Glu-629, Arg-655, and 661 to 664 (HMQQ). Residue Ser-667 is modified to Phosphoserine. Arg-735 is a binding site for beta-D-fructose 2,6-bisphosphate. A Phosphoserine modification is found at Ser-775.

The protein belongs to the phosphofructokinase type A (PFKA) family. ATP-dependent PFK group I subfamily. Eukaryotic two domain clade 'E' sub-subfamily. Homo- and heterotetramers. Phosphofructokinase (PFK) enzyme functions as a tetramer composed of different combinations of 3 types of subunits, called PFKM (M), PFKL (L) and PFKP (P). The composition of the PFK tetramer differs according to the tissue type it is present in. The kinetic and regulatory properties of the tetrameric enzyme are dependent on the subunit composition, hence can vary across tissues. Interacts (via C-terminus) with HK1 (via N-terminal spermatogenic cell-specific region). It depends on Mg(2+) as a cofactor. In terms of processing, glcNAcylation decreases enzyme activity.

The protein resides in the cytoplasm. It catalyses the reaction beta-D-fructose 6-phosphate + ATP = beta-D-fructose 1,6-bisphosphate + ADP + H(+). It functions in the pathway carbohydrate degradation; glycolysis; D-glyceraldehyde 3-phosphate and glycerone phosphate from D-glucose: step 3/4. With respect to regulation, allosterically activated by ADP, AMP, or fructose 2,6-bisphosphate, and allosterically inhibited by ATP or citrate. Catalyzes the phosphorylation of D-fructose 6-phosphate to fructose 1,6-bisphosphate by ATP, the first committing step of glycolysis. This chain is ATP-dependent 6-phosphofructokinase, muscle type (PFKM), found in Equus caballus (Horse).